A 186-amino-acid polypeptide reads, in one-letter code: A-type ATP synthase subunit E (186 aa).

The protein belongs to the V-ATPase E subunit family. As to quaternary structure, has multiple subunits with at least A(3), B(3), C, D, E, F, H, I and proteolipid K(x).

Its subcellular location is the cell membrane. Functionally, component of the A-type ATP synthase that produces ATP from ADP in the presence of a proton gradient across the membrane. The chain is A-type ATP synthase subunit E from Methanocella arvoryzae (strain DSM 22066 / NBRC 105507 / MRE50).